The chain runs to 560 residues: (E)-beta-farnesene synthase (560 aa).

Asp-312, Asp-316, Asp-457, and Glu-465 together coordinate Mg(2+). Residues 312–316 carry the DDXXD motif motif; it reads DDTFD.

Belongs to the terpene synthase family. Requires Mg(2+) as cofactor. Co(2+) is required as a cofactor. Mn(2+) serves as cofactor.

It is found in the cytoplasm. The catalysed reaction is (2E,6E)-farnesyl diphosphate = (E)-beta-farnesene + diphosphate. It functions in the pathway secondary metabolite biosynthesis; terpenoid biosynthesis. Its function is as follows. Sesquiterpene cyclase catalyzing the production of beta-farnesene from farnesyl diphosphate. In Citrus junos (Yuzu), this protein is (E)-beta-farnesene synthase.